Reading from the N-terminus, the 502-residue chain is MSIRAEEISALIKQQIENYESQIQVSDVGTVIQVGDGIARAHGLDNVMSGELVEFANGVMGMALNLEENNVGIVILGPYTGIKEGDEVRRTGRIMEVPVGEALIGRVVNPLGQPVDGLGPVETTETRPIESPAPGVMDRRSVHEPLQTGIKAIDALVPIGRGQRELIIGDRQTGKTSVAIDTIINQKDQNMICIYVAIGQKESTVRTVVETLRKHGALDYTIVVTASASQPAPLLFLAPYAGVAMGEYFMYKGQHVLVVYDDLSKQAAAYRELSLLLRRPPGREAYPGDIFYLHSRLLERAAKLSDAKGGGSLTALPFVETQAGDISAYIPTNVISITDGQIFLQSDLFFSGVRPAINAGLSVSRVGGAAQIKAMKKVAGTLRLDLAAYRELEAFAQFGSDLDKATQAKLARGARTVEVLKQDLHQPIPVEKQVLIIYALTRGFLDDIPVEDVRRFEKEFYLWLDQNGQHLLEHIRTTKDLPNEDDLNKAIEAFKKTFVVSQ.

The disordered stretch occupies residues 115–137; it reads VDGLGPVETTETRPIESPAPGVM. 169–176 lines the ATP pocket; the sequence is GDRQTGKT.

The protein belongs to the ATPase alpha/beta chains family. F-type ATPases have 2 components, CF(1) - the catalytic core - and CF(0) - the membrane proton channel. CF(1) has five subunits: alpha(3), beta(3), gamma(1), delta(1), epsilon(1). CF(0) has three main subunits: a(1), b(2) and c(9-12). The alpha and beta chains form an alternating ring which encloses part of the gamma chain. CF(1) is attached to CF(0) by a central stalk formed by the gamma and epsilon chains, while a peripheral stalk is formed by the delta and b chains.

It localises to the cell membrane. The catalysed reaction is ATP + H2O + 4 H(+)(in) = ADP + phosphate + 5 H(+)(out). Produces ATP from ADP in the presence of a proton gradient across the membrane. The alpha chain is a regulatory subunit. This is ATP synthase subunit alpha from Geobacillus kaustophilus (strain HTA426).